The chain runs to 581 residues: Proline--tRNA ligase (581 aa).

This sequence belongs to the class-II aminoacyl-tRNA synthetase family. ProS type 1 subfamily. As to quaternary structure, homodimer.

It localises to the cytoplasm. It catalyses the reaction tRNA(Pro) + L-proline + ATP = L-prolyl-tRNA(Pro) + AMP + diphosphate. In terms of biological role, catalyzes the attachment of proline to tRNA(Pro) in a two-step reaction: proline is first activated by ATP to form Pro-AMP and then transferred to the acceptor end of tRNA(Pro). As ProRS can inadvertently accommodate and process non-cognate amino acids such as alanine and cysteine, to avoid such errors it has two additional distinct editing activities against alanine. One activity is designated as 'pretransfer' editing and involves the tRNA(Pro)-independent hydrolysis of activated Ala-AMP. The other activity is designated 'posttransfer' editing and involves deacylation of mischarged Ala-tRNA(Pro). The misacylated Cys-tRNA(Pro) is not edited by ProRS. This chain is Proline--tRNA ligase, found in Blochmanniella pennsylvanica (strain BPEN).